We begin with the raw amino-acid sequence, 129 residues long: MSRIYATGKRKTAVAKVWLTKGSGKITVNGMSLDEWLGGHEALKLRVRLPLALTKMSESVDVVATTLGGGYSAQADALKHGISKALCAMDDNLRSVLKPHGLLTRDARVVERKKYGKHKARRSPQFSKR.

This sequence belongs to the universal ribosomal protein uS9 family.

This chain is Small ribosomal subunit protein uS9, found in Nitratiruptor sp. (strain SB155-2).